The chain runs to 1025 residues: Multidrug resistance protein MdtC (1025 aa).

The next 12 membrane-spanning stretches (helical) occupy residues 15-35, 333-353, 360-380, 387-407, 431-451, 469-489, 528-548, 851-871, 875-895, 897-917, 953-973, and 984-1004; these read ILIS…LPVA, EVEQ…FLFL, LIPA…MYLC, LSLM…IVVL, VGFT…PLLL, VAIG…CGWL, LTGL…ISIP, AQVI…GMLY, VHPL…LLAL, IFDA…IGIV, PIMM…LSGG, and ITIV…TPVV.

The protein belongs to the resistance-nodulation-cell division (RND) (TC 2.A.6) family. MdtC subfamily. As to quaternary structure, part of a tripartite efflux system composed of MdtA, MdtB and MdtC. MdtC forms a heteromultimer with MdtB.

It is found in the cell inner membrane. This chain is Multidrug resistance protein MdtC, found in Klebsiella pneumoniae (strain 342).